Reading from the N-terminus, the 85-residue chain is Cytochrome c2 (85 aa).

Residues Cys12, Cys15, His16, and Met61 each contribute to the heme c site.

This sequence belongs to the cytochrome c family. Post-translationally, binds 1 heme c group covalently per subunit.

Functionally, cytochrome c2 is found mainly in purple, non-sulfur, photosynthetic bacteria where it functions as the electron donor to the oxidized bacteriochlorophyll in the photophosphorylation pathway. However, it may also have a role in the respiratory chain and is found in some non-photosynthetic bacteria. This Rubrivivax gelatinosus (Rhodocyclus gelatinosus) protein is Cytochrome c2.